A 285-amino-acid polypeptide reads, in one-letter code: Pantothenate synthetase (285 aa).

30–37 (MGNLHRGH) is a binding site for ATP. H37 acts as the Proton donor in catalysis. (R)-pantoate is bound at residue Q61. Residue Q61 participates in beta-alanine binding. An ATP-binding site is contributed by 149–152 (GRKD). (R)-pantoate is bound at residue Q155. Residues V178 and 186–189 (LSSR) contribute to the ATP site.

Belongs to the pantothenate synthetase family. As to quaternary structure, homodimer.

Its subcellular location is the cytoplasm. It catalyses the reaction (R)-pantoate + beta-alanine + ATP = (R)-pantothenate + AMP + diphosphate + H(+). It functions in the pathway cofactor biosynthesis; (R)-pantothenate biosynthesis; (R)-pantothenate from (R)-pantoate and beta-alanine: step 1/1. Catalyzes the condensation of pantoate with beta-alanine in an ATP-dependent reaction via a pantoyl-adenylate intermediate. This chain is Pantothenate synthetase, found in Halorhodospira halophila (strain DSM 244 / SL1) (Ectothiorhodospira halophila (strain DSM 244 / SL1)).